Here is a 204-residue protein sequence, read N- to C-terminus: Ancillary SecYEG translocon subunit (204 aa).

Residues 1-23 lie on the Cytoplasmic side of the membrane; that stretch reads MAYSIEEEQEINQLKDWWKENGK. The chain crosses the membrane as a helical span at residues 24–42; sequence TIIVAFILGVGGMFGWRYW. Residues 43–204 lie on the Periplasmic side of the membrane; the sequence is QTHQAEQIAQ…QMAKMKLNNL (162 aa).

Belongs to the YfgM family. Interacts with the SecYEG translocon. Forms a complex with PpiD.

Its subcellular location is the cell inner membrane. May mediate protein transfer from the SecYEG translocon to the periplasmic chaperone network via its periplasmic C-terminal region. This chain is Ancillary SecYEG translocon subunit, found in Haemophilus influenzae (strain ATCC 51907 / DSM 11121 / KW20 / Rd).